Consider the following 51-residue polypeptide: Ribosome biogenesis protein Nop10 (51 aa).

Belongs to the NOP10 family.

In terms of biological role, involved in ribosome biogenesis; more specifically in 18S rRNA pseudouridylation and in cleavage of pre-rRNA. This Methanococcus maripaludis (strain C7 / ATCC BAA-1331) protein is Ribosome biogenesis protein Nop10.